Consider the following 162-residue polypeptide: Phosphopantetheine adenylyltransferase (162 aa).

A substrate-binding site is contributed by S11. ATP-binding positions include 11-12 (SF) and H19. Substrate is bound by residues K43, V76, and R90. ATP is bound by residues 91 to 93 (GLR), E101, and 126 to 132 (HLYISSS).

This sequence belongs to the bacterial CoaD family. In terms of assembly, homohexamer. Mg(2+) is required as a cofactor.

Its subcellular location is the cytoplasm. It catalyses the reaction (R)-4'-phosphopantetheine + ATP + H(+) = 3'-dephospho-CoA + diphosphate. It functions in the pathway cofactor biosynthesis; coenzyme A biosynthesis; CoA from (R)-pantothenate: step 4/5. Is inhibited by a series of cycloalkyl pyrimidines, which also show suppression of bacterial growth. Its function is as follows. Reversibly transfers an adenylyl group from ATP to 4'-phosphopantetheine, yielding dephospho-CoA (dPCoA) and pyrophosphate. In Streptococcus pneumoniae (strain ATCC BAA-255 / R6), this protein is Phosphopantetheine adenylyltransferase.